The following is a 500-amino-acid chain: Vitamin D(3) 25-hydroxylase (500 aa).

Cys446 provides a ligand contact to heme.

Belongs to the cytochrome P450 family. Heme is required as a cofactor. In terms of tissue distribution, found in liver and kidney.

The protein resides in the endoplasmic reticulum membrane. It is found in the microsome membrane. The enzyme catalyses calciol + reduced [NADPH--hemoprotein reductase] + O2 = calcidiol + oxidized [NADPH--hemoprotein reductase] + H2O + H(+). It carries out the reaction alfacalcidol + reduced [NADPH--hemoprotein reductase] + O2 = calcitriol + oxidized [NADPH--hemoprotein reductase] + H2O + H(+). It catalyses the reaction dodecanoate + reduced [NADPH--hemoprotein reductase] + O2 = 12-hydroxydodecanoate + oxidized [NADPH--hemoprotein reductase] + H2O + H(+). The catalysed reaction is dodecanoate + reduced [NADPH--hemoprotein reductase] + O2 = 11-hydroxydodecanoate + oxidized [NADPH--hemoprotein reductase] + H2O + H(+). The enzyme catalyses 5beta-cholestane-3alpha,7alpha-diol + reduced [NADPH--hemoprotein reductase] + O2 = 5beta-cholestane-3alpha,7alpha,25-triol + oxidized [NADPH--hemoprotein reductase] + H2O + H(+). It carries out the reaction 5beta-cholestane-3alpha,7alpha,12alpha-triol + reduced [NADPH--hemoprotein reductase] + O2 = 5beta-cholestane-3alpha,7alpha,12alpha,25-tetrol + oxidized [NADPH--hemoprotein reductase] + H2O + H(+). Catalyzes the 25-hydroxylation of vitamin D(3) (calciol), 1alpha-hydroxyvitamin D(3) (alphacalcidiol) and some C27 steroids. In addition the enzyme catalyzes the hydroxylation of positions 11 and 12 of dodecanoate. In Sus scrofa (Pig), this protein is Vitamin D(3) 25-hydroxylase (CYP2D25).